The sequence spans 321 residues: Glucokinase (321 aa).

ATP is bound at residue 8–13 (GDVGGT).

The protein belongs to the bacterial glucokinase family.

The protein resides in the cytoplasm. It carries out the reaction D-glucose + ATP = D-glucose 6-phosphate + ADP + H(+). The chain is Glucokinase from Escherichia coli (strain SMS-3-5 / SECEC).